Consider the following 1706-residue polypeptide: DDT domain-containing protein PTM (1706 aa).

Residues 1-16 are compositionally biased toward basic residues; it reads MEAKVPRPRGRPRKRQ. Disordered stretches follow at residues 1 to 27 and 144 to 168; these read MEAK…KLNN and VTNS…RGSD. The Nuclear localization signal motif lies at 9 to 18; the sequence is RGRPRKRQRL. Residues 148–160 are compositionally biased toward acidic residues; the sequence is EDGDSYSDSESSE. The DDT domain occupies 192-252; it reads EEAVAHLLSV…LRALKGHLER (61 aa). Over residues 375–393 the composition is skewed to basic and acidic residues; sequence YKEKEVTDSSTNESKDLDS. The tract at residues 375–408 is disordered; sequence YKEKEVTDSSTNESKDLDSRCTNGGSNEVSSDLD. Residues 394 to 408 show a composition bias toward polar residues; that stretch reads RCTNGGSNEVSSDLD. The PHD-type 1 zinc-finger motif lies at 411-458; the sequence is SDECRICGMDGTLLCCDGCPLAYHSRCIGVVKMYIPDGPWFCPECTIN. 2 disordered regions span residues 1165 to 1194 and 1311 to 1345; these read KPPS…SVSK and TNQK…PATP. 2 stretches are compositionally biased toward polar residues: residues 1167–1194 and 1311–1323; these read PSQQ…SVSK and TNQK…SGLD. Residues 1325 to 1336 are compositionally biased toward basic and acidic residues; the sequence is DSERMSEQKDSK. The next 5 membrane-spanning stretches (helical) occupy residues 1539–1559, 1569–1589, 1596–1616, 1624–1644, and 1682–1702; these read ALGS…SILP, LAGP…GLFL, ANDL…LGLI, AALH…WCGL, and MLGL…YVLI.

As to quaternary structure, interacts (via the DDT domain) with CHR11 (via C-terminus).

Its subcellular location is the plastid. The protein resides in the chloroplast outer membrane. It localises to the nucleus. Its function is as follows. Membrane-bound transcription factor required for the plastid-to-nucleus retrograde signaling. Functions in multiple retrograde pathways. The plastid-to-nucleus signal plays an important role in the coordinated expression of both nuclear- and chloroplast-localized genes that encode photosynthesis-related proteins. In the nucleus, activates ABI4 transcription in a PHD-dependent manner associated with histone modifications. Localized primarily in the chloroplast outer membrane as dormant form and, in response to retrograde signals, is released from the membrane through proteolytic cleavage and its cleaved fragment containing the transcription factor domain is redistributed to the nucleus, where it regulates the expression of particular nuclear genes. In Arabidopsis thaliana (Mouse-ear cress), this protein is DDT domain-containing protein PTM.